A 537-amino-acid chain; its full sequence is Polyadenylate-binding protein 6 (537 aa).

RRM domains are found at residues 21–99, 112–188, 202–279, and 304–381; these read GSLY…WSQR, ANLY…KFIN, TNVY…KALK, and SNLY…VAER. A disordered region spans residues 503–537; the sequence is KATTSEENRKEERRLTLSGKLSPEVKVEESGKQLQ. Basic and acidic residues-rich tracts occupy residues 506-517 and 525-537; these read TSEENRKEERRL and PEVK…KQLQ.

This sequence belongs to the polyadenylate-binding protein type-1 family. Expressed at low levels in leaves and young seedlings.

The protein localises to the cytoplasm. It localises to the nucleus. Binds the poly(A) tail of mRNA. Appears to be an important mediator of the multiple roles of the poly(A) tail in mRNA biogenesis, stability and translation. The sequence is that of Polyadenylate-binding protein 6 (PAB6) from Arabidopsis thaliana (Mouse-ear cress).